Reading from the N-terminus, the 336-residue chain is UDP-N-acetylenolpyruvoylglucosamine reductase (336 aa).

An FAD-binding PCMH-type domain is found at 17–188 (LRSLAERFVE…WDVTFRLPKK (172 aa)). Arg164 is an active-site residue. The active-site Proton donor is the Ser237. Glu332 is an active-site residue.

Belongs to the MurB family. The cofactor is FAD.

It is found in the cytoplasm. It carries out the reaction UDP-N-acetyl-alpha-D-muramate + NADP(+) = UDP-N-acetyl-3-O-(1-carboxyvinyl)-alpha-D-glucosamine + NADPH + H(+). Its pathway is cell wall biogenesis; peptidoglycan biosynthesis. Functionally, cell wall formation. This Bdellovibrio bacteriovorus (strain ATCC 15356 / DSM 50701 / NCIMB 9529 / HD100) protein is UDP-N-acetylenolpyruvoylglucosamine reductase.